The following is a 759-amino-acid chain: Phosphoribosylformylglycinamidine synthase subunit PurL (759 aa).

The active site involves His34. Residue Tyr37 coordinates ATP. A Mg(2+)-binding site is contributed by Glu95. Residues Ser96 to His99 and Arg118 each bind substrate. His97 functions as the Proton acceptor in the catalytic mechanism. Asp119 is a binding site for Mg(2+). Gln243 lines the substrate pocket. Asp271 is a binding site for Mg(2+). Glu315–Gln317 is a substrate binding site. Positions Asp388–Val422 are disordered. ATP-binding residues include Asp520 and Gly557. Position 558 (Asn558) interacts with Mg(2+). Position 560 (Ser560) interacts with substrate.

It belongs to the FGAMS family. Monomer. Part of the FGAM synthase complex composed of 1 PurL, 1 PurQ and 2 PurS subunits.

The protein localises to the cytoplasm. The enzyme catalyses N(2)-formyl-N(1)-(5-phospho-beta-D-ribosyl)glycinamide + L-glutamine + ATP + H2O = 2-formamido-N(1)-(5-O-phospho-beta-D-ribosyl)acetamidine + L-glutamate + ADP + phosphate + H(+). It functions in the pathway purine metabolism; IMP biosynthesis via de novo pathway; 5-amino-1-(5-phospho-D-ribosyl)imidazole from N(2)-formyl-N(1)-(5-phospho-D-ribosyl)glycinamide: step 1/2. Part of the phosphoribosylformylglycinamidine synthase complex involved in the purines biosynthetic pathway. Catalyzes the ATP-dependent conversion of formylglycinamide ribonucleotide (FGAR) and glutamine to yield formylglycinamidine ribonucleotide (FGAM) and glutamate. The FGAM synthase complex is composed of three subunits. PurQ produces an ammonia molecule by converting glutamine to glutamate. PurL transfers the ammonia molecule to FGAR to form FGAM in an ATP-dependent manner. PurS interacts with PurQ and PurL and is thought to assist in the transfer of the ammonia molecule from PurQ to PurL. The chain is Phosphoribosylformylglycinamidine synthase subunit PurL from Halorubrum lacusprofundi (strain ATCC 49239 / DSM 5036 / JCM 8891 / ACAM 34).